The primary structure comprises 294 residues: Acetylglutamate kinase (294 aa).

Residues 60–61, arginine 82, and asparagine 186 contribute to the substrate site; that span reads GG.

It belongs to the acetylglutamate kinase family. ArgB subfamily.

It localises to the cytoplasm. The catalysed reaction is N-acetyl-L-glutamate + ATP = N-acetyl-L-glutamyl 5-phosphate + ADP. The protein operates within amino-acid biosynthesis; L-arginine biosynthesis; N(2)-acetyl-L-ornithine from L-glutamate: step 2/4. Its function is as follows. Catalyzes the ATP-dependent phosphorylation of N-acetyl-L-glutamate. In Methanospirillum hungatei JF-1 (strain ATCC 27890 / DSM 864 / NBRC 100397 / JF-1), this protein is Acetylglutamate kinase.